We begin with the raw amino-acid sequence, 852 residues long: Phenylalanine--tRNA ligase beta subunit (852 aa).

The tRNA-binding domain maps to 44–159 (PETTGPLVIG…DADLASANLK (116 aa)). Residues 428 to 510 (PEMPMITIHT…RLEGLEDIPS (83 aa)) enclose the B5 domain. Mg(2+)-binding residues include aspartate 488, aspartate 494, glutamate 497, and glutamate 498. The FDX-ACB domain occupies 758-851 (SAFPAVLQDI…ATEKVGAQLR (94 aa)).

Belongs to the phenylalanyl-tRNA synthetase beta subunit family. Type 1 subfamily. Tetramer of two alpha and two beta subunits. It depends on Mg(2+) as a cofactor.

It localises to the cytoplasm. The enzyme catalyses tRNA(Phe) + L-phenylalanine + ATP = L-phenylalanyl-tRNA(Phe) + AMP + diphosphate + H(+). This is Phenylalanine--tRNA ligase beta subunit from Corynebacterium jeikeium (strain K411).